We begin with the raw amino-acid sequence, 307 residues long: Serine/threonine-protein phosphatase PP2A-3 catalytic subunit (307 aa).

Residues Asp-55, His-57, Asp-83, and Asn-115 each contribute to the Mn(2+) site. His-116 functions as the Proton donor in the catalytic mechanism. The Mn(2+) site is built by His-165 and His-239.

Belongs to the PPP phosphatase family. PP-2A subfamily. The cofactor is Mn(2+).

The protein resides in the cytoplasm. The catalysed reaction is O-phospho-L-seryl-[protein] + H2O = L-seryl-[protein] + phosphate. It carries out the reaction O-phospho-L-threonyl-[protein] + H2O = L-threonyl-[protein] + phosphate. The protein is Serine/threonine-protein phosphatase PP2A-3 catalytic subunit (PP2A3) of Oryza sativa subsp. indica (Rice).